The sequence spans 209 residues: Small ribosomal subunit protein uS4 (209 aa).

The region spanning 99 to 162 (RRLDNVVYRL…RESNKFQEMK (64 aa)) is the S4 RNA-binding domain.

The protein belongs to the universal ribosomal protein uS4 family. As to quaternary structure, part of the 30S ribosomal subunit. Contacts protein S5. The interaction surface between S4 and S5 is involved in control of translational fidelity.

Functionally, one of the primary rRNA binding proteins, it binds directly to 16S rRNA where it nucleates assembly of the body of the 30S subunit. In terms of biological role, with S5 and S12 plays an important role in translational accuracy. The polypeptide is Small ribosomal subunit protein uS4 (Syntrophomonas wolfei subsp. wolfei (strain DSM 2245B / Goettingen)).